We begin with the raw amino-acid sequence, 330 residues long: MREKELKHIENLLLLKVKKEKIEETDKIKEYLKRFEDERRFDGIKESTIKSDLDRLRVFLDYCINYLGKNPEELKTSDFVKFFNYLDTVRKVSKSSQRKYFLLLKVFYRVLRMYNVIQEFVEESKDRKRFARIEIQHYDAVDAEMLNMILKKIIESGSRTRIRDALIIRLLWDTGCRVSEVLNLKYKDCDLDNGIFKIRNTKTHEERTVVCSSDTLELLRNYVQFNVRQGSDDYLFQNSQGGRVRKEWISEVFRKAVNELKEEGKIPKNRRIVIHSIRHGRAVDLLNKGVPIDIVKEYLGHKSMNTTLIYAHSKERAESLEFIKKLLRIQ.

One can recognise a Core-binding (CB) domain in the interval 22-112 (IEETDKIKEY…LLKVFYRVLR (91 aa)). Residues 136-325 (QHYDAVDAEM…RAESLEFIKK (190 aa)) enclose the Tyr recombinase domain. Residues arginine 177, lysine 202, histidine 275, arginine 278, and histidine 301 contribute to the active site. Tyrosine 310 acts as the O-(3'-phospho-DNA)-tyrosine intermediate in catalysis.

It belongs to the 'phage' integrase family.

In Methanocaldococcus jannaschii (strain ATCC 43067 / DSM 2661 / JAL-1 / JCM 10045 / NBRC 100440) (Methanococcus jannaschii), this protein is Probable integrase/recombinase protein MJ0367.